The primary structure comprises 418 residues: Tyrosine--tRNA ligase (418 aa).

Tyrosine 34 serves as a coordination point for L-tyrosine. Positions 39–48 (PTADSLHLGH) match the 'HIGH' region motif. L-tyrosine-binding residues include tyrosine 169 and glutamine 173. The 'KMSKS' region signature appears at 229–233 (KFGKS). Lysine 232 lines the ATP pocket. An S4 RNA-binding domain is found at 352-418 (HNIVEILVAA…GKKKYAVLTY (67 aa)).

This sequence belongs to the class-I aminoacyl-tRNA synthetase family. TyrS type 1 subfamily. Homodimer.

The protein resides in the cytoplasm. It catalyses the reaction tRNA(Tyr) + L-tyrosine + ATP = L-tyrosyl-tRNA(Tyr) + AMP + diphosphate + H(+). Functionally, catalyzes the attachment of tyrosine to tRNA(Tyr) in a two-step reaction: tyrosine is first activated by ATP to form Tyr-AMP and then transferred to the acceptor end of tRNA(Tyr). The protein is Tyrosine--tRNA ligase of Streptococcus pyogenes serotype M1.